The following is a 122-amino-acid chain: Large ribosomal subunit protein uL14 (122 aa).

The protein belongs to the universal ribosomal protein uL14 family. Part of the 50S ribosomal subunit. Forms a cluster with proteins L3 and L19. In the 70S ribosome, L14 and L19 interact and together make contacts with the 16S rRNA in bridges B5 and B8.

Binds to 23S rRNA. Forms part of two intersubunit bridges in the 70S ribosome. The protein is Large ribosomal subunit protein uL14 of Thiobacillus denitrificans (strain ATCC 25259 / T1).